Reading from the N-terminus, the 170-residue chain is N-alpha-acetyltransferase 50 (170 aa).

The N-acetyltransferase domain occupies 6-155; that stretch reads IELGDVTPHN…DAHVLQKNLK (150 aa). Residue Y31 coordinates substrate. Residue Y73 is part of the active site. M75 contributes to the substrate binding site. An acetyl-CoA-binding site is contributed by 77 to 90; the sequence is LGCLAPYRRLGIGT. Residue 79-90 participates in CoA binding; that stretch reads CLAPYRRLGIGT. Residue H112 is part of the active site. 117–126 provides a ligand contact to CoA; it reads NESAIDFYRK. Residues 138-141 form a substrate region; that stretch reads YYKR.

Belongs to the acetyltransferase family. GNAT subfamily.

It is found in the cytoplasm. It localises to the nucleus. It catalyses the reaction N-terminal L-methionyl-L-alanyl-[protein] + acetyl-CoA = N-terminal N(alpha)-acetyl-L-methionyl-L-alanyl-[protein] + CoA + H(+). It carries out the reaction N-terminal L-methionyl-L-seryl-[protein] + acetyl-CoA = N-terminal N(alpha)-acetyl-L-methionyl-L-seryl-[protein] + CoA + H(+). The enzyme catalyses N-terminal L-methionyl-L-valyl-[protein] + acetyl-CoA = N-terminal N(alpha)-acetyl-L-methionyl-L-valyl-[protein] + CoA + H(+). The catalysed reaction is N-terminal L-methionyl-L-threonyl-[protein] + acetyl-CoA = N-terminal N(alpha)-acetyl-L-methionyl-L-threonyl-[protein] + CoA + H(+). It catalyses the reaction N-terminal L-methionyl-L-lysyl-[protein] + acetyl-CoA = N-terminal N(alpha)-acetyl-L-methionyl-L-lysyl-[protein] + CoA + H(+). It carries out the reaction N-terminal L-methionyl-L-leucyl-[protein] + acetyl-CoA = N-terminal N(alpha)-acetyl-L-methionyl-L-leucyl-[protein] + CoA + H(+). The enzyme catalyses N-terminal L-methionyl-L-phenylalanyl-[protein] + acetyl-CoA = N-terminal N(alpha)-acetyl-L-methionyl-L-phenylalanyl-[protein] + CoA + H(+). The catalysed reaction is N-terminal L-methionyl-L-tyrosyl-[protein] + acetyl-CoA = N-terminal N(alpha)-acetyl-L-methionyl-L-tyrosyl-[protein] + CoA + H(+). Its function is as follows. N-alpha-acetyltransferase that acetylates the N-terminus of proteins that retain their initiating methionine. Has a broad substrate specificity: able to acetylate the initiator methionine of most peptides, except for those with a proline in second position. Also displays N-epsilon-acetyltransferase activity by mediating acetylation of the side chain of specific lysines on proteins. The relevance of N-epsilon-acetyltransferase activity is however unclear. Required for sister chromatid cohesion during mitosis by promoting binding of CDCA5/sororin to cohesin. In Xenopus laevis (African clawed frog), this protein is N-alpha-acetyltransferase 50 (naa50).